The primary structure comprises 332 residues: Ornithine carbamoyltransferase 1, catabolic (332 aa).

Residues 56-59, Gln-83, Arg-107, and 134-137 each bind carbamoyl phosphate; these read STRT and HPTQ. Residues Asn-167, Asp-231, and 235–236 each bind L-ornithine; that span reads SM. Carbamoyl phosphate contacts are provided by residues 273 to 274 and Arg-318; that span reads CL.

Belongs to the aspartate/ornithine carbamoyltransferase superfamily. OTCase family.

It is found in the cytoplasm. It carries out the reaction carbamoyl phosphate + L-ornithine = L-citrulline + phosphate + H(+). It functions in the pathway amino-acid degradation; L-arginine degradation via ADI pathway; carbamoyl phosphate from L-arginine: step 2/2. Its function is as follows. Reversibly catalyzes the transfer of the carbamoyl group from carbamoyl phosphate (CP) to the N(epsilon) atom of ornithine (ORN) to produce L-citrulline. This Streptococcus agalactiae serotype III (strain NEM316) protein is Ornithine carbamoyltransferase 1, catabolic (arcB1).